Reading from the N-terminus, the 660-residue chain is Neurexin-2-beta (660 aa).

Residues 1-10 (MPPGGSGQGG) show a composition bias toward gly residues. The segment at 1 to 27 (MPPGGSGQGGCPRRPPALAGPLPPPPP) is disordered. The signal sequence occupies residues 1-46 (MPPGGSGQGGCPRRPPALAGPLPPPPPPPPLPLLLGLLLLLGAAEG). Over 47-584 (ARVSSSLSTT…EVIRESSSTT (538 aa)) the chain is Extracellular. In terms of domain architecture, Laminin G-like spans 87–295 (TTYIFGKGGA…HLRLVGEGPS (209 aa)). The Ca(2+) site is built by Asp139 and Val156. The N-linked (GlcNAc...) asparagine glycan is linked to Asn186. Residues Ile238 and Asn240 each coordinate Ca(2+). Ser350 carries an O-linked (Xyl...) (heparan sulfate) serine glycan. Disordered stretches follow at residues 408-458 (ATQD…LPPT) and 537-571 (EPRR…RGPP). The N-linked (GlcNAc...) asparagine glycan is linked to Asn561. Residues 585–605 (GMVVGIVAAAALCILILLYAM) traverse the membrane as a helical segment. At 606-660 (YKYRNRDEGSYQVDQSRNYISNSAQSNGAVVKEKAPAAPKTPSKAKKNKDKEYYV) the chain is on the cytoplasmic side. The tract at residues 627–660 (NSAQSNGAVVKEKAPAAPKTPSKAKKNKDKEYYV) is disordered.

The protein belongs to the neurexin family. In terms of assembly, interacts (via cytoplasmic C-terminal region) with CASK. Specific isoforms bind alpha-dystroglycan and neuroligins NLGN1, NLGN2 and NLGN3. Interacts with CBLN1, CBLN2 and, less avidly, with CBLN4. Interacts with CLSTN3. In terms of processing, O-glycosylated; contains heparan sulfate. Heparan sulfate attachment is required for synapse development by mediating interactions with neuroligins.

Its subcellular location is the presynaptic cell membrane. Functionally, neuronal cell surface protein that may be involved in cell recognition and cell adhesion. The protein is Neurexin-2-beta of Mus musculus (Mouse).